Here is a 550-residue protein sequence, read N- to C-terminus: Eukaryotic translation initiation factor 3 subunit D-2 (550 aa).

Residues 97–126 are disordered; the sequence is RGRGFRPSVHNNPRNVRNQRGRKGNAMGNI. The segment at 287–301 is RNA gate; that stretch reads KFDMLTVNETSQEPP. Residues 530–550 are disordered; sequence SDVSEEEESSEDKPFGLSMNN.

It belongs to the eIF-3 subunit D family. As to quaternary structure, component of the eukaryotic translation initiation factor 3 (eIF-3) complex. The eIF-3 complex interacts with pix.

The protein localises to the cytoplasm. MRNA cap-binding component of the eukaryotic translation initiation factor 3 (eIF-3) complex, which is involved in protein synthesis of a specialized repertoire of mRNAs and, together with other initiation factors, stimulates binding of mRNA and methionyl-tRNAi to the 40S ribosome. The eIF-3 complex specifically targets and initiates translation of a subset of mRNAs involved in cell proliferation. In the eIF-3 complex, eif3d specifically recognizes and binds the 7-methylguanosine cap of a subset of mRNAs. The chain is Eukaryotic translation initiation factor 3 subunit D-2 from Drosophila willistoni (Fruit fly).